We begin with the raw amino-acid sequence, 368 residues long: Abasic site processing protein YMR114C (368 aa).

The active-site Nucleophile is C2. Residue C2 is modified to Thiazolidine linkage to a ring-opened DNA abasic site. Positions 25–48 (VNTPKDASSNSQHPHDEEDTKDQP) are disordered. A compositionally biased stretch (basic and acidic residues) spans 37–46 (HPHDEEDTKD). E132 is an active-site residue. The segment at 270 to 368 (LENDNEQGID…DSRGKKKIKK (99 aa)) is disordered. Basic and acidic residues-rich tracts occupy residues 281–296 (RGVK…DVFN), 304–313 (NSYDGLKKNE), and 326–349 (IGDR…EKRN). Residue S338 is modified to Phosphoserine.

It belongs to the SOS response-associated peptidase family.

Its subcellular location is the chromosome. With respect to regulation, formation and reversal of DNA-protein cross-link depends on DNA context. Catalyzes formation of the thiazolidine linkage in presence of abasic sites in single-stranded DNA. Mediates the reversal of the thiazolidine cross-link in presence of double stranded DNA. Sensor of abasic sites in single-stranded DNA (ssDNA) required to preserve genome integrity by promoting error-free repair of abasic sites. Recognizes and binds abasic sites in ssDNA at replication forks and chemically modifies the lesion by forming a covalent cross-link with DNA: forms a stable thiazolidine linkage between a ring-opened abasic site and the alpha-amino and sulfhydryl substituents of its N-terminal catalytic cysteine residue. The DNA-protein cross-link is then reversed: able to catalyze the reversal of the thiazolidine cross-link and cycle between a cross-link and a non-cross-linked state depending on DNA context: mediates self-reversal of the thiazolidine cross-link in double stranded DNA. Acts as a protease: mediates autocatalytic processing of its N-terminal methionine in order to expose the catalytic cysteine. This Saccharomyces cerevisiae (strain ATCC 204508 / S288c) (Baker's yeast) protein is Abasic site processing protein YMR114C.